A 346-amino-acid polypeptide reads, in one-letter code: Uroporphyrinogen decarboxylase (346 aa).

Substrate is bound by residues Arg26–Arg30, Asp76, Tyr153, Ser208, and His323.

It belongs to the uroporphyrinogen decarboxylase family. In terms of assembly, homodimer.

It is found in the cytoplasm. The enzyme catalyses uroporphyrinogen III + 4 H(+) = coproporphyrinogen III + 4 CO2. It participates in porphyrin-containing compound metabolism; protoporphyrin-IX biosynthesis; coproporphyrinogen-III from 5-aminolevulinate: step 4/4. Its function is as follows. Catalyzes the decarboxylation of four acetate groups of uroporphyrinogen-III to yield coproporphyrinogen-III. The chain is Uroporphyrinogen decarboxylase from Prochlorococcus marinus (strain MIT 9215).